Reading from the N-terminus, the 112-residue chain is uncharacterized protein (112 aa).

A mitochondrion-targeting transit peptide spans 1–21; it reads MYLSAQLMRTVTASHLTLRAL.

The protein resides in the mitochondrion. This is an uncharacterized protein from Saccharomyces cerevisiae (strain ATCC 204508 / S288c) (Baker's yeast).